The sequence spans 256 residues: Protein N-terminal and lysine N-methyltransferase EFM7 (256 aa).

The disordered stretch occupies residues 1 to 26 (MSDTESLNDALGLFDEPEDFRPEKPK). S-adenosyl-L-methionine contacts are provided by residues Trp64, 90–92 (GAA), Asp112, Trp145, and Ser168.

Belongs to the class I-like SAM-binding methyltransferase superfamily. EFM7 family.

It localises to the cytoplasm. Functionally, S-adenosyl-L-methionine-dependent protein methyltransferase that trimethylates the N-terminal glycine 'Gly-2' of elongation factor 1-alpha, before also catalyzing the mono- and dimethylation of 'Lys-3'. This Candida glabrata (strain ATCC 2001 / BCRC 20586 / JCM 3761 / NBRC 0622 / NRRL Y-65 / CBS 138) (Yeast) protein is Protein N-terminal and lysine N-methyltransferase EFM7.